The primary structure comprises 122 residues: MAWKGEVLANNEAGQVTSIIYNPGDVITIVAAGWASYGPTQKWGPQGDREHPDQGLICHDAFCGALVMKIGNSGTIPVNTGLFRWVAPNNVQGAITLIYNDVPGTYGNNSGSFSVNIGKDQS.

The protein belongs to the LecA/PllA lectin family.

The protein resides in the cytoplasm. It is found in the periplasm. It localises to the cell surface. Its function is as follows. D-galactose specific lectin. Binds in decreasing order of affinity: melibiose, methyl-alpha-D-galactoside, D-galactose, methyl-beta-D-galactoside, N-acetyl-D-galactosamine. Similar to plant lectins in its selective (carbohydrate-specific) hemagglutinating activity. The protein is PA-I galactophilic lectin (lecA) of Pseudomonas aeruginosa (strain ATCC 15692 / DSM 22644 / CIP 104116 / JCM 14847 / LMG 12228 / 1C / PRS 101 / PAO1).